Reading from the N-terminus, the 1235-residue chain is ATP-dependent helicase/nuclease subunit A (1235 aa).

The UvrD-like helicase ATP-binding domain maps to 4–470; that stretch reads REYTLSQKQA…IILAENFRSM (467 aa). Position 25 to 32 (25 to 32) interacts with ATP; that stretch reads ASAGSGKT. The UvrD-like helicase C-terminal domain maps to 501–795; sequence QFGAKYYPDE…KLMTIHGSKG (295 aa).

The protein belongs to the helicase family. AddA subfamily. As to quaternary structure, heterodimer of AddA and AddB/RexB. It depends on Mg(2+) as a cofactor.

The catalysed reaction is Couples ATP hydrolysis with the unwinding of duplex DNA by translocating in the 3'-5' direction.. It carries out the reaction ATP + H2O = ADP + phosphate + H(+). The heterodimer acts as both an ATP-dependent DNA helicase and an ATP-dependent, dual-direction single-stranded exonuclease. Recognizes the chi site generating a DNA molecule suitable for the initiation of homologous recombination. The AddA nuclease domain is required for chi fragment generation; this subunit has the helicase and 3' -&gt; 5' nuclease activities. The sequence is that of ATP-dependent helicase/nuclease subunit A from Pediococcus pentosaceus (strain ATCC 25745 / CCUG 21536 / LMG 10740 / 183-1w).